The primary structure comprises 698 residues: MPSDAPSSLASTRNIGIMAHIDAGKTTTTERILFYTGVNYKIGEVHEGGATMDWMEQEQERGITITSAATTCIWRDHTINIIDTPGHVDFTVEVERSLRVLDGAVAVFDAVAGVEPQSETVWKQADRYNVPRIAFVNKMDRVGAEFHRCVDMMVERLDATPAVIQLPWGVESDFRGVIDLIRMKGLLWKSEDKGASYEVVDIPRDHLEAAQEWRDKLLETVAENDDELMELYLEGEEPSEEQLMAGLRRGTLASKINPVLCGSAFKNKGVQPMLDAVVDFLPNPLDIGATIGHSVSDEDAEVRREPSEDEPFSALAFKIMSDPYVGKLTYIRVYSGRLTGGSPVLNSTKDRKERIGRILQMHANHREDRDGVGAGQIVAVVGLKNTTTGDTLCDPNAPVILESMTFPAPVIHVAIEPKTKADQQKLGTAIQRLAEEDPTFQVRTDEETGQTIIAGMGELHLDVLVDRMRREYGVEANVGKPQVAYRETIRRKVEKVDYTHKKQTGGSGQYARVIINLEPSGGDGGGYEFENKVTGGRIPREYIPSVDAGCQEAMEFGVLAGYPLVDVKVTLLDGQYHDVDSSELAFKIAGSMAFKDAARKADPVLLEPLMAVEVTTPEDHMGDVIGDLNSRRGQIQAMEERGGSRIVRAQVPLSEMFGYVGDLRSKTSGRASYSMQFDSYAEVPGNVAKEIIAKARGE.

A tr-type G domain is found at 10–285; that stretch reads ASTRNIGIMA…AVVDFLPNPL (276 aa). GTP-binding positions include 19–26, 83–87, and 137–140; these read AHIDAGKT, DTPGH, and NKMD.

The protein belongs to the TRAFAC class translation factor GTPase superfamily. Classic translation factor GTPase family. EF-G/EF-2 subfamily.

It localises to the cytoplasm. Functionally, catalyzes the GTP-dependent ribosomal translocation step during translation elongation. During this step, the ribosome changes from the pre-translocational (PRE) to the post-translocational (POST) state as the newly formed A-site-bound peptidyl-tRNA and P-site-bound deacylated tRNA move to the P and E sites, respectively. Catalyzes the coordinated movement of the two tRNA molecules, the mRNA and conformational changes in the ribosome. The polypeptide is Elongation factor G (Frankia alni (strain DSM 45986 / CECT 9034 / ACN14a)).